A 222-amino-acid polypeptide reads, in one-letter code: MSEANSTPTATLPSMRVSYEAGSLDEGSLAGTWHEQLALWFEQAVHDPSIHEANAMVLATADADGLPSSRTVLCKGFDARGVVFFTNYTSAKSHDLKVTRFAAATFPWLAMQRQVNVRGTVEKVSQEETAEYWAERPRGSQLGAWASPQSRVVSGRSALESTLNGIERRFADAEKVPVPPHWGGWRIVPESVEFWQGRPDRLHDRLRFRNNDGAWVVERLAP.

Substrate is bound by residues 16-19 (RVSY) and K75. FMN-binding positions include 70–75 (RTVLCK), 85–86 (FT), K92, and Q114. Residues Y132, R136, and S140 each coordinate substrate. Residues 149 to 150 (QS) and W195 contribute to the FMN site. Substrate is bound at residue 201–203 (RLH). R205 serves as a coordination point for FMN.

It belongs to the pyridoxamine 5'-phosphate oxidase family. In terms of assembly, homodimer. FMN is required as a cofactor.

It catalyses the reaction pyridoxamine 5'-phosphate + O2 + H2O = pyridoxal 5'-phosphate + H2O2 + NH4(+). It carries out the reaction pyridoxine 5'-phosphate + O2 = pyridoxal 5'-phosphate + H2O2. Its pathway is cofactor metabolism; pyridoxal 5'-phosphate salvage; pyridoxal 5'-phosphate from pyridoxamine 5'-phosphate: step 1/1. It functions in the pathway cofactor metabolism; pyridoxal 5'-phosphate salvage; pyridoxal 5'-phosphate from pyridoxine 5'-phosphate: step 1/1. Functionally, catalyzes the oxidation of either pyridoxine 5'-phosphate (PNP) or pyridoxamine 5'-phosphate (PMP) into pyridoxal 5'-phosphate (PLP). The chain is Pyridoxine/pyridoxamine 5'-phosphate oxidase from Saccharopolyspora erythraea (strain ATCC 11635 / DSM 40517 / JCM 4748 / NBRC 13426 / NCIMB 8594 / NRRL 2338).